The primary structure comprises 129 residues: Small ribosomal subunit protein uS11 (129 aa).

Belongs to the universal ribosomal protein uS11 family. As to quaternary structure, part of the 30S ribosomal subunit. Interacts with proteins S7 and S18. Binds to IF-3.

Its function is as follows. Located on the platform of the 30S subunit, it bridges several disparate RNA helices of the 16S rRNA. Forms part of the Shine-Dalgarno cleft in the 70S ribosome. The chain is Small ribosomal subunit protein uS11 from Maridesulfovibrio salexigens (strain ATCC 14822 / DSM 2638 / NCIMB 8403 / VKM B-1763) (Desulfovibrio salexigens).